The chain runs to 38 residues: Photosystem II reaction center protein L (38 aa).

A helical membrane pass occupies residues 17 to 37 (SLYWGLLLIFVLAVLFSSYFF).

The protein belongs to the PsbL family. PSII is composed of 1 copy each of membrane proteins PsbA, PsbB, PsbC, PsbD, PsbE, PsbF, PsbH, PsbI, PsbJ, PsbK, PsbL, PsbM, PsbT, PsbX, PsbY, PsbZ, Psb30/Ycf12, at least 3 peripheral proteins of the oxygen-evolving complex and a large number of cofactors. It forms dimeric complexes.

Its subcellular location is the plastid. It is found in the chloroplast thylakoid membrane. In terms of biological role, one of the components of the core complex of photosystem II (PSII). PSII is a light-driven water:plastoquinone oxidoreductase that uses light energy to abstract electrons from H(2)O, generating O(2) and a proton gradient subsequently used for ATP formation. It consists of a core antenna complex that captures photons, and an electron transfer chain that converts photonic excitation into a charge separation. This subunit is found at the monomer-monomer interface and is required for correct PSII assembly and/or dimerization. This chain is Photosystem II reaction center protein L, found in Ephedra sinica (Chinese ephedra).